The chain runs to 142 residues: Large ribosomal subunit protein uL11 (142 aa).

The protein belongs to the universal ribosomal protein uL11 family. As to quaternary structure, part of the ribosomal stalk of the 50S ribosomal subunit. Interacts with L10 and the large rRNA to form the base of the stalk. L10 forms an elongated spine to which L12 dimers bind in a sequential fashion forming a multimeric L10(L12)X complex. Post-translationally, one or more lysine residues are methylated.

In terms of biological role, forms part of the ribosomal stalk which helps the ribosome interact with GTP-bound translation factors. This chain is Large ribosomal subunit protein uL11, found in Bradyrhizobium sp. (strain BTAi1 / ATCC BAA-1182).